Reading from the N-terminus, the 366-residue chain is MVIKFLSALILLLVTTAAQAERIRDLTSVQGVRQNSLIGYGLVVGLDGTGDQTTQTPFTTQTLNNMLSQLGITVPTGTNMQLKNVAAVMVTASLPPFGRQGQTIDVVVSSMGNAKSLRGGTLLMTPLKGVDSQVYALAQGNILVGGAGASAGGSSVQVNQLNGGRITNGAVIERELPSQFGVGNTLNLQLNDEDFSMAQQIADTINRVRGYGSATALDARTIQVRVPSGNSSQVRFLADIQNMQVNVTPQDAKVVINLRTGSVVMNREVTLDSCAVAQGNLSVTVNRQANVSQPDTPFGGGQTVVTPQTQIDLRQSGGSLQSVRSSASLNNVVRALNALGATPMDLMSILQSMQSAGCLRAKLEII.

The signal sequence occupies residues Met-1 to Ala-20.

This sequence belongs to the FlgI family. As to quaternary structure, the basal body constitutes a major portion of the flagellar organelle and consists of four rings (L,P,S, and M) mounted on a central rod.

Its subcellular location is the periplasm. The protein resides in the bacterial flagellum basal body. In terms of biological role, assembles around the rod to form the L-ring and probably protects the motor/basal body from shearing forces during rotation. The polypeptide is Flagellar P-ring protein (Escherichia coli O1:K1 / APEC).